We begin with the raw amino-acid sequence, 281 residues long: Putative phosphatase MPN_264 (281 aa).

Asp-8 functions as the Nucleophile in the catalytic mechanism. A Mg(2+)-binding site is contributed by Asp-8. Residue Leu-9 coordinates phosphate. Asp-10 is a Mg(2+) binding site. Phosphate is bound by residues 44–45 (TG) and Lys-205. Mg(2+)-binding residues include Asp-228 and Ser-229. Position 231 (Asn-231) interacts with phosphate.

The protein belongs to the HAD-like hydrolase superfamily. Cof family. The cofactor is Mg(2+).

The polypeptide is Putative phosphatase MPN_264 (Mycoplasma pneumoniae (strain ATCC 29342 / M129 / Subtype 1) (Mycoplasmoides pneumoniae)).